Consider the following 252-residue polypeptide: Triosephosphate isomerase (252 aa).

10-12 (NWK) lines the substrate pocket. His96 functions as the Electrophile in the catalytic mechanism. Glu168 functions as the Proton acceptor in the catalytic mechanism. Residues Gly174, Ser214, and 235–236 (GG) each bind substrate.

It belongs to the triosephosphate isomerase family. As to quaternary structure, homodimer.

It localises to the cytoplasm. The enzyme catalyses D-glyceraldehyde 3-phosphate = dihydroxyacetone phosphate. It participates in carbohydrate biosynthesis; gluconeogenesis. It functions in the pathway carbohydrate degradation; glycolysis; D-glyceraldehyde 3-phosphate from glycerone phosphate: step 1/1. Its function is as follows. Involved in the gluconeogenesis. Catalyzes stereospecifically the conversion of dihydroxyacetone phosphate (DHAP) to D-glyceraldehyde-3-phosphate (G3P). This chain is Triosephosphate isomerase, found in Streptococcus pyogenes serotype M5 (strain Manfredo).